The chain runs to 208 residues: Probable nicotinate-nucleotide adenylyltransferase (208 aa).

The protein belongs to the NadD family.

The enzyme catalyses nicotinate beta-D-ribonucleotide + ATP + H(+) = deamido-NAD(+) + diphosphate. The protein operates within cofactor biosynthesis; NAD(+) biosynthesis; deamido-NAD(+) from nicotinate D-ribonucleotide: step 1/1. In terms of biological role, catalyzes the reversible adenylation of nicotinate mononucleotide (NaMN) to nicotinic acid adenine dinucleotide (NaAD). This Trichormus variabilis (strain ATCC 29413 / PCC 7937) (Anabaena variabilis) protein is Probable nicotinate-nucleotide adenylyltransferase.